The chain runs to 92 residues: UPF0223 protein SMU_1141c (92 aa).

The protein belongs to the UPF0223 family.

The protein is UPF0223 protein SMU_1141c of Streptococcus mutans serotype c (strain ATCC 700610 / UA159).